Consider the following 786-residue polypeptide: Receptor-interacting serine/threonine-protein kinase 4 (786 aa).

A Protein kinase domain is found at 22 to 286; that stretch reads FAGWEKVGSG…QEITSETEDL (265 aa). ATP is bound by residues 28–36 and Lys51; that span reads VGSGGFGQV. Residue Lys51 forms a Glycyl lysine isopeptide (Lys-Gly) (interchain with G-Cter in ubiquitin) linkage. Catalysis depends on Asp143, which acts as the Proton acceptor. A Glycyl lysine isopeptide (Lys-Gly) (interchain with G-Cter in ubiquitin) cross-link involves residue Lys145. 2 disordered regions span residues 293 to 328 and 347 to 378; these read EVKD…APPF and QTLE…GVSS. Residues 295–319 show a composition bias toward basic and acidic residues; the sequence is KDLAHEPGEKSSLESKSEARPESSR. The span at 357–378 shows a compositional bias: low complexity; the sequence is RSSSECKLPSSSSGKRLSGVSS. ANK repeat units follow at residues 439 to 468, 472 to 501, 505 to 534, 538 to 567, 571 to 601, 605 to 634, 638 to 667, 671 to 700, 704 to 734, and 736 to 765; these read SSAS…NPNL, KGST…SVNA, DQWT…SVNE, EGRT…DVGL, DAWL…SVNA, DGRT…DVNI, QAQT…GKEA, EGYT…DVMA, LNQT…DLSD, and QGLS…HINL.

Belongs to the protein kinase superfamily. TKL Ser/Thr protein kinase family. Interacts with PRKCB. Interacts with TRAF1, TRAF2, TRAF3 and TRAF5. Interacts with BIRC2/c-IAP1, BIRC3/c-IAP2 and XIAP/BIRC4. In terms of processing, may be phosphorylated by MAP3K2 and MAP3K3. Proteolytically cleaved by during Fas-induced apoptosis. Cleavage at Asp-342 and Asp-380. Post-translationally, polyubiquitinated with 'Lys-48' and 'Lys-63'-linked chains by BIRC2/c-IAP1 and BIRC3/c-IAP2, leading to activation of NF-kappa-B. Expressed in the epidermis of the skin (at protein level). Ubiquitously expressed, with an abundant expression in the thymus, bone marrow, pro-B, pre-B and immature B cells and a weak expression in the spleen.

The protein resides in the cytoplasm. Its subcellular location is the membrane. The catalysed reaction is L-seryl-[protein] + ATP = O-phospho-L-seryl-[protein] + ADP + H(+). The enzyme catalyses L-threonyl-[protein] + ATP = O-phospho-L-threonyl-[protein] + ADP + H(+). In terms of biological role, serine/threonine protein kinase. Required for embryonic skin development and correct skin homeostasis in adults, via phosphorylation of PKP1 and subsequent promotion of keratinocyte differentiation and cell adhesion. It is a direct transcriptional target of TP63. Plays a role in NF-kappa-B activation. This chain is Receptor-interacting serine/threonine-protein kinase 4 (Ripk4), found in Mus musculus (Mouse).